The primary structure comprises 153 residues: Ubiquitin/ISG15-conjugating enzyme E2 L6 (153 aa).

The UBC core domain occupies 2-149 (MASMRVVKEL…AEEFTLRFGV (148 aa)). The active-site Glycyl thioester intermediate is the cysteine 86.

This sequence belongs to the ubiquitin-conjugating enzyme family. In terms of assembly, interacts with RNF19A, RNF19B and RNF144B. Interacts with FLT3 (tyrosine phosphorylated). Post-translationally, ISGylated. Present in natural killer cells (at protein level).

It catalyses the reaction S-ubiquitinyl-[E1 ubiquitin-activating enzyme]-L-cysteine + [E2 ubiquitin-conjugating enzyme]-L-cysteine = [E1 ubiquitin-activating enzyme]-L-cysteine + S-ubiquitinyl-[E2 ubiquitin-conjugating enzyme]-L-cysteine.. Its pathway is protein modification; protein ubiquitination. Functionally, catalyzes the covalent attachment of ubiquitin or ISG15 to other proteins. Functions in the E6/E6-AP-induced ubiquitination of p53/TP53. Promotes ubiquitination and subsequent proteasomal degradation of FLT3. The polypeptide is Ubiquitin/ISG15-conjugating enzyme E2 L6 (UBE2L6) (Homo sapiens (Human)).